Consider the following 1553-residue polypeptide: Dual oxidase 1 (1553 aa).

The signal sequence occupies residues 1-21; it reads MGFRLALAWTLLVGPWMPMGA. The Extracellular segment spans residues 22 to 596; the sequence is RNSISWEVQR…YFKGSGFGFG (575 aa). The interval 26–593 is peroxidase-like; mediates peroxidase activity; sequence SWEVQRFDGW…MRDYFKGSGF (568 aa). N-linked (GlcNAc...) asparagine glycosylation is found at N94, N342, N354, and N534. Residues 597 to 617 form a helical membrane-spanning segment; sequence VTIGTLCCFPLVSLLSAWIVA. Residues 618–1046 lie on the Cytoplasmic side of the membrane; the sequence is QLRRRNFKRL…KRFVENYRRH (429 aa). 3 consecutive EF-hand domains span residues 815-850, 851-886, and 895-930; these read PQDM…FMKG, SPEE…FIEI, and QLTE…HDSE. Ca(2+) is bound by residues D828, D830, N832, Y834, E839, D864, D866, N868, and E875. The interaction with TXNDC11 stretch occupies residues 956-1250; it reads YISQEKLCPS…GSFALIQLPR (295 aa). A helical transmembrane segment spans residues 1047-1067; it reads IGCLAVFYTIAGGLFLERAYY. Topologically, residues 1068 to 1082 are extracellular; that stretch reads YAFAAHHMGITDTTR. Residues 1083 to 1103 form a helical membrane-spanning segment; that stretch reads VGIILSRGTAASISFMFSYIL. The region spanning 1089–1271 is the Ferric oxidoreductase domain; that stretch reads RGTAASISFM…YVGDKLVSLS (183 aa). Residues 1104–1138 lie on the Cytoplasmic side of the membrane; the sequence is LTMCRNLITFLRETFLNRYVPFDAAVDFHRLIAST. The chain crosses the membrane as a helical span at residues 1139–1159; the sequence is AIILTVLHSAGHVVNVYLFSI. The Extracellular portion of the chain corresponds to 1160–1190; it reads SPLSVLSCLFPGLFHDNGSEFPQKYYWWFFQ. Residues 1191–1211 form a helical membrane-spanning segment; it reads TVPGLTGVMLLLILAIMYVFA. Residues 1212-1228 are Cytoplasmic-facing; the sequence is SHHFRRCSFRGFWLTHH. The chain crosses the membrane as a helical span at residues 1229–1249; the sequence is LYILLYMLLIIHGSFALIQLP. Position 1250 (R1250) is a topological domain, extracellular. Residues 1251–1271 traverse the membrane as a helical segment; that stretch reads FHIFFLVPALIYVGDKLVSLS. The FAD-binding FR-type domain occupies 1272-1378; sequence RKKVEISVVK…DGPFGEGHQE (107 aa). Topologically, residues 1272 to 1553 are cytoplasmic; the sequence is RKKVEISVVK…THFSHHYENF (282 aa).

This sequence in the N-terminal section; belongs to the peroxidase family. Interacts with TXNDC11, TPO and CYBA. Post-translationally, N-glycosylated. Specifically expressed in thyroid.

Its subcellular location is the apical cell membrane. It catalyses the reaction NADH + O2 + H(+) = H2O2 + NAD(+). The catalysed reaction is NADPH + O2 + H(+) = H2O2 + NADP(+). It participates in hormone biosynthesis; thyroid hormone biosynthesis. With respect to regulation, the NADPH oxidase activity is calcium-dependent. Peroxidase activity is inhibited by aminobenzohydrazide. Its function is as follows. Generates hydrogen peroxide which is required for the activity of thyroid peroxidase/TPO and lactoperoxidase/LPO. Plays a role in thyroid hormones synthesis and lactoperoxidase-mediated antimicrobial defense at the surface of mucosa. May have its own peroxidase activity through its N-terminal peroxidase-like domain. This Sus scrofa (Pig) protein is Dual oxidase 1 (DUOX1).